The primary structure comprises 527 residues: Flagellar radial spoke protein 5 (527 aa).

Positions 1-22 (MSEPGEEPVAAPAGPAPDPVLN) are disordered. The stretch at 101–153 (RKWNELTIQAKQLEQEVAGLKGPDAEAKQAELENVKVQIADAEAAVAEVKQSF) forms a coiled coil. Asymmetric dimethylarginine occurs at positions 191 and 366.

Belongs to the aldo/keto reductase family. In terms of processing, asymmetrically dimethylated at Arg-191 and Arg-366 during flagellum resorption. Probably methylated by PRMT1.

The protein resides in the cytoplasm. The protein localises to the cytoskeleton. Its subcellular location is the flagellum axoneme. In terms of biological role, flagellar radial spokes contribute to the regulation of dynein arm activity and thus the pattern of flagellar bending. They consist of a thin stalk, which is attached to the a subfiber of the outer doublet microtubule, and a bulbous head, which is attached to the stalk and appears to interact with the projections from the central pair of microtubules. This is Flagellar radial spoke protein 5 from Chlamydomonas reinhardtii (Chlamydomonas smithii).